The chain runs to 414 residues: Lysosome-associated membrane glycoprotein 1 (414 aa).

The N-terminal stretch at 1–18 is a signal peptide; it reads MGGAARAVLLGFLQASSS. A first lumenal domain region spans residues 19 to 181; sequence FDVRDSTGKV…SANKTECRED (163 aa). The Lumenal segment spans residues 19-379; the sequence is FDVRDSTGKV…EECQLDENNM (361 aa). Cysteine 29 and cysteine 67 are disulfide-bonded. N-linked (GlcNAc...) asparagine glycosylation is found at asparagine 33, asparagine 58, asparagine 71, asparagine 90, asparagine 108, asparagine 117, asparagine 154, asparagine 159, asparagine 168, and asparagine 174. A disulfide bond links cysteine 142 and cysteine 178. The segment at 182–224 is hinge; that stretch reads MVSTTTVAPTTPKHATSQVPTTSPAPTAAPSSPAVGKYNVTGA. The segment at 186 to 213 is disordered; that stretch reads TTVAPTTPKHATSQVPTTSPAPTAAPSS. The segment covering 196 to 213 has biased composition (low complexity); the sequence is ATSQVPTTSPAPTAAPSS. Residues asparagine 220, asparagine 225, asparagine 238, asparagine 259, asparagine 289, asparagine 301, and asparagine 319 are each glycosylated (N-linked (GlcNAc...) asparagine). Positions 225–379 are second lumenal domain; the sequence is NGTCVLASMG…EECQLDENNM (155 aa). Cysteine 228 and cysteine 266 form a disulfide bridge. A disulfide bridge links cysteine 335 with cysteine 372. Residues 380-403 form a helical membrane-spanning segment; sequence LIPIIVGAALAGLVLIVLIAYLIG. The Cytoplasmic segment spans residues 404 to 414; it reads RKRSHAGYQTI.

Belongs to the LAMP family.

It is found in the lysosome membrane. The protein localises to the endosome membrane. Its subcellular location is the late endosome membrane. The protein resides in the cell membrane. It localises to the cytolytic granule membrane. Its function is as follows. Lysosomal membrane glycoprotein which plays an important role in lysosome biogenesis, lysosomal pH regulation, autophagy and cholesterol homeostasis. (Microbial infection) Plays an essential role in efficient replication and spread of Marek's disease virus, by facilitating viral cell-to-cell spread. The protein is Lysosome-associated membrane glycoprotein 1 (LAMP1) of Gallus gallus (Chicken).